A 26-amino-acid polypeptide reads, in one-letter code: Maculatin-3.1 (26 aa).

The residue at position 26 (Ala-26) is an Alanine amide.

Expressed by the skin dorsal glands.

It is found in the secreted. Its function is as follows. Shows antibacterial activity against S.uberis. This is Maculatin-3.1 from Ranoidea genimaculata (Brown-spotted tree frog).